A 390-amino-acid polypeptide reads, in one-letter code: Protein arginine N-methyltransferase 1.1 (390 aa).

The segment covering 1-10 (MTKNSNHDEN) has biased composition (basic and acidic residues). Positions 1 to 59 (MTKNSNHDENEFISFEPNQNTKIRFEDADEDEVAEGSGVAGEETPQDESMFDAGESADT) are disordered. The region spanning 69-390 (ADYYFDSYSH…ISRTQHYKMR (322 aa)) is the SAM-dependent MTase PRMT-type domain. Residues glutamate 181 and glutamate 190 contribute to the active site.

Belongs to the class I-like SAM-binding methyltransferase superfamily. Protein arginine N-methyltransferase family. As to quaternary structure, interacts with PRMT12, MBD7 and FIB2.

Its subcellular location is the nucleus. The protein resides in the cytoplasm. It catalyses the reaction L-arginyl-[protein] + 2 S-adenosyl-L-methionine = N(omega),N(omega)-dimethyl-L-arginyl-[protein] + 2 S-adenosyl-L-homocysteine + 2 H(+). Its function is as follows. Methylates (mono and asymmetric dimethylation) the guanidino nitrogens of arginyl residues present in a glycine and arginine-rich domain. Type I arginine methyltransferase active on both histones and non-histone proteins. Required for leaves and flowers development. Mediates the methylation of MBD7 and MED36A. The polypeptide is Protein arginine N-methyltransferase 1.1 (PRMT11) (Arabidopsis thaliana (Mouse-ear cress)).